A 457-amino-acid chain; its full sequence is UDP-N-acetylmuramate--L-alanine ligase (457 aa).

117–123 (GTHGKTT) is an ATP binding site.

It belongs to the MurCDEF family.

It localises to the cytoplasm. It carries out the reaction UDP-N-acetyl-alpha-D-muramate + L-alanine + ATP = UDP-N-acetyl-alpha-D-muramoyl-L-alanine + ADP + phosphate + H(+). It functions in the pathway cell wall biogenesis; peptidoglycan biosynthesis. Functionally, cell wall formation. This chain is UDP-N-acetylmuramate--L-alanine ligase, found in Clostridium kluyveri (strain NBRC 12016).